Consider the following 162-residue polypeptide: NADH-quinone oxidoreductase subunit I (162 aa).

4Fe-4S ferredoxin-type domains are found at residues 53 to 83 and 93 to 122; these read LRRY…IDSA and TRYD…ETHI. [4Fe-4S] cluster-binding residues include cysteine 63, cysteine 66, cysteine 69, cysteine 73, cysteine 102, cysteine 105, cysteine 108, and cysteine 112.

The protein belongs to the complex I 23 kDa subunit family. NDH-1 is composed of 14 different subunits. Subunits NuoA, H, J, K, L, M, N constitute the membrane sector of the complex. The cofactor is [4Fe-4S] cluster.

It is found in the cell inner membrane. It catalyses the reaction a quinone + NADH + 5 H(+)(in) = a quinol + NAD(+) + 4 H(+)(out). NDH-1 shuttles electrons from NADH, via FMN and iron-sulfur (Fe-S) centers, to quinones in the respiratory chain. The immediate electron acceptor for the enzyme in this species is believed to be ubiquinone. Couples the redox reaction to proton translocation (for every two electrons transferred, four hydrogen ions are translocated across the cytoplasmic membrane), and thus conserves the redox energy in a proton gradient. This is NADH-quinone oxidoreductase subunit I from Xanthomonas axonopodis pv. citri (strain 306).